A 214-amino-acid chain; its full sequence is Adenylate kinase (214 aa).

10-15 (GAGKGT) serves as a coordination point for ATP. The interval 30-59 (CTGDMLRAAVKAGSELGLKAKEIMDAGKLV) is NMP. AMP contacts are provided by residues T31, R36, 57-59 (KLV), 85-88 (GFPR), and Q92. The tract at residues 122-159 (GRRVHAASGRVYHIKFNPPKVEDKDDVTGEELTIRKDD) is LID. Residues R123 and 132 to 133 (VY) each bind ATP. R156 and R167 together coordinate AMP. R200 contributes to the ATP binding site.

This sequence belongs to the adenylate kinase family. Monomer.

The protein localises to the cytoplasm. The enzyme catalyses AMP + ATP = 2 ADP. The protein operates within purine metabolism; AMP biosynthesis via salvage pathway; AMP from ADP: step 1/1. In terms of biological role, catalyzes the reversible transfer of the terminal phosphate group between ATP and AMP. Plays an important role in cellular energy homeostasis and in adenine nucleotide metabolism. In Yersinia enterocolitica, this protein is Adenylate kinase.